The chain runs to 162 residues: Cyclic pyranopterin monophosphate synthase (162 aa).

Substrate contacts are provided by residues 75 to 77 (LCH) and 113 to 114 (ME). The active site involves Asp128.

Belongs to the MoaC family. In terms of assembly, homohexamer; trimer of dimers.

The catalysed reaction is (8S)-3',8-cyclo-7,8-dihydroguanosine 5'-triphosphate = cyclic pyranopterin phosphate + diphosphate. Its pathway is cofactor biosynthesis; molybdopterin biosynthesis. Functionally, catalyzes the conversion of (8S)-3',8-cyclo-7,8-dihydroguanosine 5'-triphosphate to cyclic pyranopterin monophosphate (cPMP). This is Cyclic pyranopterin monophosphate synthase from Klebsiella pneumoniae subsp. pneumoniae (strain ATCC 700721 / MGH 78578).